The following is a 447-amino-acid chain: Exodeoxyribonuclease 7 large subunit (447 aa).

This sequence belongs to the XseA family. As to quaternary structure, heterooligomer composed of large and small subunits.

It localises to the cytoplasm. The enzyme catalyses Exonucleolytic cleavage in either 5'- to 3'- or 3'- to 5'-direction to yield nucleoside 5'-phosphates.. Bidirectionally degrades single-stranded DNA into large acid-insoluble oligonucleotides, which are then degraded further into small acid-soluble oligonucleotides. The polypeptide is Exodeoxyribonuclease 7 large subunit (Exiguobacterium sibiricum (strain DSM 17290 / CCUG 55495 / CIP 109462 / JCM 13490 / 255-15)).